The chain runs to 436 residues: Chaperone protein dnaJ 16 (436 aa).

Positions 20–85 (DPYEVLGVLR…EKRRQFDSAG (66 aa)) constitute a J domain. A coiled-coil region spans residues 291 to 348 (TQEKEDLRSVEAQILTKRAELAKFETEYREVLVQFTDMTSRYAQEMQSIDELLKQRNE). The interval 360 to 416 (KRSSSKNRMRKSSFKKAAAKAPAPTEQEEEEEEEEEEEEESSRQKNKKPSTCDKSET) is disordered. Residues 362 to 377 (SSSKNRMRKSSFKKAA) are compositionally biased toward basic residues. The span at 385 to 399 (EQEEEEEEEEEEEEE) shows a compositional bias: acidic residues.

The protein belongs to the DnaJ family. B/II subfamily. As to expression, expressed constitutively in seedlings, roots, leaves, stems, flowers and siliques.

The protein resides in the membrane. Functionally, plays a continuous role in plant development probably in the structural organization of compartments. Seems to not be involved in gravitropism signaling pathway. In Arabidopsis thaliana (Mouse-ear cress), this protein is Chaperone protein dnaJ 16 (ATJ16).